The sequence spans 478 residues: Cytochrome c-552 (478 aa).

An N-terminal signal peptide occupies residues 1–26 (MARKTLRARRFFSLIFPFFFITSVYA). His94 lines the heme c pocket. Residues Cys122, Cys125, and Lys126 each contribute to the heme site. Heme c contacts are provided by Cys160, Cys163, His164, Cys209, Cys212, and His213. Ca(2+) is bound by residues Glu215, Tyr216, Lys261, and Gln263. Tyr216 serves as a coordination point for substrate. His264 provides a ligand contact to substrate. 9 residues coordinate heme c: His275, Cys282, Cys285, His286, His301, Cys314, Cys317, His318, and His393.

It belongs to the cytochrome c-552 family. Requires Ca(2+) as cofactor. The cofactor is heme c.

The protein localises to the periplasm. The enzyme catalyses 6 Fe(III)-[cytochrome c] + NH4(+) + 2 H2O = 6 Fe(II)-[cytochrome c] + nitrite + 8 H(+). It functions in the pathway nitrogen metabolism; nitrate reduction (assimilation). Functionally, catalyzes the reduction of nitrite to ammonia, consuming six electrons in the process. In Salmonella dublin (strain CT_02021853), this protein is Cytochrome c-552.